The primary structure comprises 109 residues: Hainantoxin-XVIII-3 (109 aa).

A signal peptide spans M1–A18. A propeptide spanning residues F19–A46 is cleaved from the precursor. 4 cysteine pairs are disulfide-bonded: C47-C62, C55-C68, C59-C108, and C61-C81.

Belongs to the neurotoxin 25 family. F7 subfamily. In terms of tissue distribution, expressed by the venom gland.

It is found in the secreted. In terms of biological role, putative ion channel inhibitor. The chain is Hainantoxin-XVIII-3 from Cyriopagopus hainanus (Chinese bird spider).